A 248-amino-acid chain; its full sequence is Ribonuclease PH (248 aa).

Residues Arg86 and 124-126 (GTR) each bind phosphate.

It belongs to the RNase PH family. Homohexameric ring arranged as a trimer of dimers.

It carries out the reaction tRNA(n+1) + phosphate = tRNA(n) + a ribonucleoside 5'-diphosphate. Functionally, phosphorolytic 3'-5' exoribonuclease that plays an important role in tRNA 3'-end maturation. Removes nucleotide residues following the 3'-CCA terminus of tRNAs; can also add nucleotides to the ends of RNA molecules by using nucleoside diphosphates as substrates, but this may not be physiologically important. Probably plays a role in initiation of 16S rRNA degradation (leading to ribosome degradation) during starvation. In Clostridium perfringens (strain ATCC 13124 / DSM 756 / JCM 1290 / NCIMB 6125 / NCTC 8237 / Type A), this protein is Ribonuclease PH.